Here is a 407-residue protein sequence, read N- to C-terminus: Argininosuccinate synthase (407 aa).

ATP-binding positions include 11-19 (AYSGGLDTS) and Ala38. Residues Tyr91 and Ser96 each coordinate L-citrulline. Gly121 provides a ligand contact to ATP. L-aspartate-binding residues include Thr123, Asn127, and Asp128. An L-citrulline-binding site is contributed by Asn127. L-citrulline-binding residues include Arg131, Ser181, Ser190, Glu266, and Tyr278.

The protein belongs to the argininosuccinate synthase family. Type 1 subfamily. As to quaternary structure, homotetramer.

It localises to the cytoplasm. The enzyme catalyses L-citrulline + L-aspartate + ATP = 2-(N(omega)-L-arginino)succinate + AMP + diphosphate + H(+). It functions in the pathway amino-acid biosynthesis; L-arginine biosynthesis; L-arginine from L-ornithine and carbamoyl phosphate: step 2/3. In Campylobacter concisus (strain 13826), this protein is Argininosuccinate synthase.